The primary structure comprises 229 residues: Protein MC132 (229 aa).

As to quaternary structure, interacts with host RELA (via RHD domain), ELOB, ELOC and CUL5; these interactions induce the proteasomal degradation of host RELA.

Its subcellular location is the host cytoplasm. Its function is as follows. Inhibits host NF-kappa-B activation stimulated by IL-1 and multiple PRR viral detection pathways. Targets host NF-kappa-B component RELA/p65 for ubiquitin-dependent proteasomal degradation. The chain is Protein MC132 (MC132) from Homo sapiens (Human).